The following is a 147-amino-acid chain: MKKNVALDKALKEILNEEGASTQEEICEKLSSLGIATTQSSVSRWLKKVHAIKIPGDKGARYSLPPSIDDSSIKHLVFSIRHNSSLIVIRTAPGSASWIASLIDNKFAESILGTLAGDDTIFITPITESTISLTAKDIENFLLVFSE.

Belongs to the ArgR family.

Its subcellular location is the cytoplasm. It participates in amino-acid biosynthesis; L-arginine biosynthesis [regulation]. Regulates arginine biosynthesis genes. The protein is Arginine repressor of Chlamydia caviae (strain ATCC VR-813 / DSM 19441 / 03DC25 / GPIC) (Chlamydophila caviae).